Consider the following 351-residue polypeptide: uncharacterized protein (351 aa).

This sequence belongs to the glycosyltransferase group 1 family. Glycosyltransferase 4 subfamily.

This is an uncharacterized protein from Methanocaldococcus jannaschii (strain ATCC 43067 / DSM 2661 / JAL-1 / JCM 10045 / NBRC 100440) (Methanococcus jannaschii).